A 150-amino-acid chain; its full sequence is Deoxyuridine 5'-triphosphate nucleotidohydrolase (150 aa).

Substrate contacts are provided by residues 69–71 (RSG), asparagine 82, 86–88 (LID), and methionine 96.

This sequence belongs to the dUTPase family. Requires Mg(2+) as cofactor.

It carries out the reaction dUTP + H2O = dUMP + diphosphate + H(+). It functions in the pathway pyrimidine metabolism; dUMP biosynthesis; dUMP from dCTP (dUTP route): step 2/2. Its function is as follows. This enzyme is involved in nucleotide metabolism: it produces dUMP, the immediate precursor of thymidine nucleotides and it decreases the intracellular concentration of dUTP so that uracil cannot be incorporated into DNA. The sequence is that of Deoxyuridine 5'-triphosphate nucleotidohydrolase from Leptothrix cholodnii (strain ATCC 51168 / LMG 8142 / SP-6) (Leptothrix discophora (strain SP-6)).